The primary structure comprises 276 residues: CASP-like protein 4A3 (276 aa).

Polar residues predominate over residues 1–13; it reads MPSMSPSSISTEK. The tract at residues 1–76 is disordered; the sequence is MPSMSPSSIS…PVKIEETPSP (76 aa). At 1 to 126 the chain is on the cytoplasmic side; it reads MPSMSPSSIS…RRSRREEIVK (126 aa). Over residues 43-72 the composition is skewed to basic and acidic residues; the sequence is SLDHSSDSEKEDEKRRPESRRNKNPVKIEE. Residues 127-147 form a helical membrane-spanning segment; it reads FVALGFRLSEVVLALISFSIM. Residues 148–167 lie on the Extracellular side of the membrane; sequence AADKTKGWSGDSFDRYKEYR. Residues 168-188 form a helical membrane-spanning segment; the sequence is FCLSVNVVAFIYASFQACDLA. The Cytoplasmic portion of the chain corresponds to 189–205; the sequence is YHLVKEKHLISHHLRPL. The chain crosses the membrane as a helical span at residues 206–226; it reads FEFIIDQVLAYLLMCASTAAV. Over 227–244 the chain is Extracellular; that stretch reads TRVDDWVSNWGKDDFTEM. The chain crosses the membrane as a helical span at residues 245 to 265; sequence ASASIAMSFLTFLAFAFSSLI. The Cytoplasmic portion of the chain corresponds to 266-276; that stretch reads SGYNLFNQDSL.

It belongs to the Casparian strip membrane proteins (CASP) family. Homodimer and heterodimers.

The protein localises to the cell membrane. This is CASP-like protein 4A3 from Arabidopsis lyrata subsp. lyrata (Lyre-leaved rock-cress).